We begin with the raw amino-acid sequence, 118 residues long: Large ribosomal subunit protein bL19 (118 aa).

The protein belongs to the bacterial ribosomal protein bL19 family.

Functionally, this protein is located at the 30S-50S ribosomal subunit interface and may play a role in the structure and function of the aminoacyl-tRNA binding site. In Aliarcobacter butzleri (strain RM4018) (Arcobacter butzleri), this protein is Large ribosomal subunit protein bL19.